The sequence spans 234 residues: tRNA1(Val) (adenine(37)-N6)-methyltransferase (234 aa).

The protein belongs to the methyltransferase superfamily. tRNA (adenine-N(6)-)-methyltransferase family.

The protein resides in the cytoplasm. The catalysed reaction is adenosine(37) in tRNA1(Val) + S-adenosyl-L-methionine = N(6)-methyladenosine(37) in tRNA1(Val) + S-adenosyl-L-homocysteine + H(+). In terms of biological role, specifically methylates the adenine in position 37 of tRNA(1)(Val) (anticodon cmo5UAC). The protein is tRNA1(Val) (adenine(37)-N6)-methyltransferase of Pedobacter heparinus (strain ATCC 13125 / DSM 2366 / CIP 104194 / JCM 7457 / NBRC 12017 / NCIMB 9290 / NRRL B-14731 / HIM 762-3).